The chain runs to 860 residues: Spindle and centriole-associated protein 1 (860 aa).

4 disordered regions span residues 127 to 150 (RKRT…GINQ), 172 to 201 (DDAG…HSNR), 230 to 250 (ATQS…AEDQ), and 294 to 332 (PLLA…TGSS). 3 stretches are compositionally biased toward polar residues: residues 139–150 (PDSSQSHTGINQ), 190–200 (ELPNSLSQHSN), and 230–245 (ATQS…SSEL). Thr-236 carries the phosphothreonine modification. Ser-240 carries the post-translational modification Phosphoserine. Residues 317 to 329 (SSSTASADRPSST) are compositionally biased toward low complexity. A coiled-coil region spans residues 383–439 (RYLKESEIQLRKEVETRQQLEQMLGDHRELIDALTAEILSLREENSTMQARLQQYMV). The segment at 623 to 645 (PAFVSLSQPPCSSLPSTQQPRNP) is disordered. Residues 627-642 (SLSQPPCSSLPSTQQP) show a composition bias toward low complexity. Ser-648 carries the post-translational modification Phosphoserine. Positions 693–718 (ITSSGGEQGDGLREPRKQGSASEVST) are disordered. The stretch at 729–757 (SSMEERIAELNRQSMEARSKLLQLIEQQK) forms a coiled coil. 4 positions are modified to phosphoserine: Ser-765, Ser-766, Ser-769, and Ser-824. Residues 792-860 (GMEASESSKC…GWFALSAHIP (69 aa)) are disordered. Over residues 804–824 (VSPVSGNSSRRSSGAISNSCS) the composition is skewed to low complexity.

In terms of assembly, interacts with CEP120.

Its subcellular location is the cytoplasm. The protein resides in the cytoskeleton. The protein localises to the microtubule organizing center. It localises to the centrosome. It is found in the centriole. Its subcellular location is the spindle. Its function is as follows. Regulator required for centriole duplication, for proper bipolar spindle formation and chromosome congression in mitosis. The protein is Spindle and centriole-associated protein 1 (Spice1) of Mus musculus (Mouse).